The chain runs to 253 residues: Aspartate/glutamate leucyltransferase (253 aa).

It belongs to the R-transferase family. Bpt subfamily.

It localises to the cytoplasm. It carries out the reaction N-terminal L-glutamyl-[protein] + L-leucyl-tRNA(Leu) = N-terminal L-leucyl-L-glutamyl-[protein] + tRNA(Leu) + H(+). The enzyme catalyses N-terminal L-aspartyl-[protein] + L-leucyl-tRNA(Leu) = N-terminal L-leucyl-L-aspartyl-[protein] + tRNA(Leu) + H(+). Functions in the N-end rule pathway of protein degradation where it conjugates Leu from its aminoacyl-tRNA to the N-termini of proteins containing an N-terminal aspartate or glutamate. The polypeptide is Aspartate/glutamate leucyltransferase (Allorhizobium ampelinum (strain ATCC BAA-846 / DSM 112012 / S4) (Agrobacterium vitis (strain S4))).